The sequence spans 450 residues: Divalent metal cation transporter MntH (450 aa).

Transmembrane regions (helical) follow at residues 34–54, 61–81, 108–128, 141–161, 170–190, 212–232, 263–283, 305–325, 361–381, 383–403, and 422–442; these read LSFL…GNWI, AQYG…AMLL, IAII…IAEV, IPLI…LFIM, AIVG…VYIS, GILY…NLYL, IQLS…ASLF, PVLG…ALLA, SLAV…AAKI, QLLV…LIPL, and VNII…YLIV.

This sequence belongs to the NRAMP family.

It localises to the cell membrane. H(+)-stimulated, divalent metal cation uptake system. This is Divalent metal cation transporter MntH from Staphylococcus aureus (strain Mu3 / ATCC 700698).